We begin with the raw amino-acid sequence, 239 residues long: Ribonuclease PH (239 aa).

Phosphate-binding positions include Arg86 and 124–126; that span reads GTR.

The protein belongs to the RNase PH family. Homohexameric ring arranged as a trimer of dimers.

It carries out the reaction tRNA(n+1) + phosphate = tRNA(n) + a ribonucleoside 5'-diphosphate. Functionally, phosphorolytic 3'-5' exoribonuclease that plays an important role in tRNA 3'-end maturation. Removes nucleotide residues following the 3'-CCA terminus of tRNAs; can also add nucleotides to the ends of RNA molecules by using nucleoside diphosphates as substrates, but this may not be physiologically important. Probably plays a role in initiation of 16S rRNA degradation (leading to ribosome degradation) during starvation. The sequence is that of Ribonuclease PH from Rhizobium etli (strain CIAT 652).